The chain runs to 197 residues: MFRRATSTFLSRASATRRFSTDVATPATNSSFVEAWRKVSPNIDPPKTPLEFLKTRPPVPSTIPTKLTVNFVLPYSSQLAAKEVDSVIIPATTGEMGVLPGHVATIAELKPGVLTVQEGTDTTKYFVSSGFRFIHANSVADIIAVEAVPVNQLDRDLVQKGLQEFTQKLNSATTDLEKREAQIGIDVDSALNSALTG.

A mitochondrion-targeting transit peptide spans 1–19 (MFRRATSTFLSRASATRRF).

The protein belongs to the ATPase epsilon chain family. As to quaternary structure, F-type ATPases have 2 components, CF(1) - the catalytic core - and CF(0) - the membrane proton channel. CF(1) has five subunits: alpha(3), beta(3), gamma(1), delta(1), epsilon(1). CF(0) has three main subunits: a, b and c.

It localises to the mitochondrion. It is found in the mitochondrion inner membrane. Functionally, mitochondrial membrane ATP synthase (F(1)F(0) ATP synthase or Complex V) produces ATP from ADP in the presence of a proton gradient across the membrane which is generated by electron transport complexes of the respiratory chain. F-type ATPases consist of two structural domains, F(1) - containing the extramembraneous catalytic core, and F(0) - containing the membrane proton channel, linked together by a central stalk and a peripheral stalk. During catalysis, ATP turnover in the catalytic domain of F(1) is coupled via a rotary mechanism of the central stalk subunits to proton translocation. Part of the complex F(1) domain and of the central stalk which is part of the complex rotary element. Rotation of the central stalk against the surrounding alpha(3)beta(3) subunits leads to hydrolysis of ATP in three separate catalytic sites on the beta subunits. In Pisum sativum (Garden pea), this protein is ATP synthase subunit delta', mitochondrial.